The following is a 231-amino-acid chain: Probable pseudouridine-5'-phosphatase (231 aa).

The active-site Nucleophile is D15. Residues D15 and D17 each contribute to the Mg(2+) site. The active-site Proton donor is the D17.

Belongs to the HAD-like hydrolase superfamily. CbbY/CbbZ/Gph/YieH family. The cofactor is Mg(2+).

The catalysed reaction is psi-UMP + H2O = pseudouridine + phosphate. In terms of biological role, dephosphorylates pseudouridine 5'-phosphate, a potential intermediate in rRNA degradation. The protein is Probable pseudouridine-5'-phosphatase (Gs1l) of Drosophila melanogaster (Fruit fly).